The primary structure comprises 168 residues: uncharacterized protein (168 aa).

The protein localises to the mitochondrion. This is an uncharacterized protein from Marchantia polymorpha (Common liverwort).